A 352-amino-acid chain; its full sequence is UDP-N-acetylglucosamine--N-acetylmuramyl-(pentapeptide) pyrophosphoryl-undecaprenol N-acetylglucosamine transferase (352 aa).

UDP-N-acetyl-alpha-D-glucosamine contacts are provided by residues 14–16 (TGG), Asn-124, Arg-164, Ser-185, and Gln-285.

This sequence belongs to the glycosyltransferase 28 family. MurG subfamily.

The protein localises to the cell inner membrane. It carries out the reaction di-trans,octa-cis-undecaprenyl diphospho-N-acetyl-alpha-D-muramoyl-L-alanyl-D-glutamyl-meso-2,6-diaminopimeloyl-D-alanyl-D-alanine + UDP-N-acetyl-alpha-D-glucosamine = di-trans,octa-cis-undecaprenyl diphospho-[N-acetyl-alpha-D-glucosaminyl-(1-&gt;4)]-N-acetyl-alpha-D-muramoyl-L-alanyl-D-glutamyl-meso-2,6-diaminopimeloyl-D-alanyl-D-alanine + UDP + H(+). Its pathway is cell wall biogenesis; peptidoglycan biosynthesis. In terms of biological role, cell wall formation. Catalyzes the transfer of a GlcNAc subunit on undecaprenyl-pyrophosphoryl-MurNAc-pentapeptide (lipid intermediate I) to form undecaprenyl-pyrophosphoryl-MurNAc-(pentapeptide)GlcNAc (lipid intermediate II). The protein is UDP-N-acetylglucosamine--N-acetylmuramyl-(pentapeptide) pyrophosphoryl-undecaprenol N-acetylglucosamine transferase of Chlamydia trachomatis serovar A (strain ATCC VR-571B / DSM 19440 / HAR-13).